The primary structure comprises 421 residues: ATP-dependent RNA helicase RhlB (421 aa).

The Q motif signature appears at 9–37 (QKFSDFALHPQVVEALEKKRFYNCTPIQA). The Helicase ATP-binding domain maps to 40-219 (LPLTLAGRDV…FEQMNNAEYV (180 aa)). Residue 53-60 (AQTGTGKT) participates in ATP binding. The DEAD box motif lies at 165-168 (DEAD). The region spanning 245 to 390 (RLLQTLIEEE…VSKYNPEALM (146 aa)) is the Helicase C-terminal domain. A disordered region spans residues 396–421 (PLRLTRSRPGNGPRRAGAPRNRRRSG). The segment covering 402 to 414 (SRPGNGPRRAGAP) has biased composition (low complexity).

Belongs to the DEAD box helicase family. RhlB subfamily. As to quaternary structure, component of the RNA degradosome, which is a multiprotein complex involved in RNA processing and mRNA degradation.

It is found in the cytoplasm. The enzyme catalyses ATP + H2O = ADP + phosphate + H(+). Functionally, DEAD-box RNA helicase involved in RNA degradation. Has RNA-dependent ATPase activity and unwinds double-stranded RNA. This chain is ATP-dependent RNA helicase RhlB, found in Salmonella dublin (strain CT_02021853).